The primary structure comprises 645 residues: Cysteine-rich receptor-like protein kinase 10 (645 aa).

The N-terminal stretch at 1-27 is a signal peptide; that stretch reads MSMACYYLAAAAAGLALLLLHAPLTDA. Gnk2-homologous domains follow at residues 28-132 and 140-251; these read QTLV…NDAF and SQGM…VYPF. The Extracellular portion of the chain corresponds to 28-283; that stretch reads QTLVPLCGDS…AGERSKNKRS (256 aa). N-linked (GlcNAc...) asparagine glycans are attached at residues asparagine 39 and asparagine 91. 2 disulfide bridges follow: cysteine 86–cysteine 95 and cysteine 98–cysteine 123. Residues asparagine 151 and asparagine 169 are each glycosylated (N-linked (GlcNAc...) asparagine). Intrachain disulfides connect cysteine 204-cysteine 213 and cysteine 216-cysteine 242. A helical transmembrane segment spans residues 284-304; that stretch reads AILAISMPTIALVLATIAAWF. Topologically, residues 305–645 are cytoplasmic; that stretch reads CSTSWRRRRL…WVQEIGATAS (341 aa). In terms of domain architecture, Protein kinase spans 348–619; sequence FSEHKRLGEG…PLMSAVNAML (272 aa). ATP-binding positions include 354 to 362 and lysine 376; that span reads LGEGGFGVV. Catalysis depends on aspartate 473, which acts as the Proton acceptor.

This sequence belongs to the protein kinase superfamily. Ser/Thr protein kinase family. CRK subfamily.

The protein resides in the membrane. Its function is as follows. Involved in disease resistance. Required for NPR1/NH1-mediated immunity to the bacterial blight pathogen Xanthomomas oryzae pv. oryzae (Xoo). Required for the benzothiadiazole (BTH)-induced immune response. Probably regulated by the transcription factor TGA2.1. The polypeptide is Cysteine-rich receptor-like protein kinase 10 (Oryza sativa subsp. japonica (Rice)).